Here is a 283-residue protein sequence, read N- to C-terminus: DegV domain-containing protein lin2658 (283 aa).

Residues 5–282 (IAVVTDSTTY…EGALGLTWSI (278 aa)) enclose the DegV domain. 2 residues coordinate hexadecanoate: Ser63 and Ser96.

Functionally, may bind long-chain fatty acids, such as palmitate, and may play a role in lipid transport or fatty acid metabolism. This is DegV domain-containing protein lin2658 from Listeria innocua serovar 6a (strain ATCC BAA-680 / CLIP 11262).